The following is a 529-amino-acid chain: Beta-hexosaminidase subunit alpha (529 aa).

The first 22 residues, 1 to 22 (MASSRLWFSLLLAAALAGRATA), serve as a signal peptide directing secretion. A propeptide spanning residues 23–88 (LWPWPQNIQT…PRPYLTGKRH (66 aa)) is cleaved from the precursor. Residues cysteine 58 and cysteine 104 are joined by a disulfide bond. 3 N-linked (GlcNAc...) asparagine glycosylation sites follow: asparagine 115, asparagine 157, and asparagine 295. An intrachain disulfide couples cysteine 277 to cysteine 328. The active-site Proton donor is glutamate 323. The interval 423 to 424 (NR) is critical for hydrolysis GM2 gangliosides. An intrachain disulfide couples cysteine 505 to cysteine 522.

The protein belongs to the glycosyl hydrolase 20 family. As to quaternary structure, there are 3 beta-hexosaminidase isozymes: isozyme A (hexosaminidase A) is a heterodimer composed of one subunit alpha and one subunit beta (chain A and B); isozyme B (hexosaminidase B) is a homodimer of two beta subunits (two chains A and B); isozyme S (hexosaminidase S) is a homodimer of two alpha subunits. The composition of the dimer (isozyme A versus isozyme S) has a significant effect on the substrate specificity of the alpha subunit active site.

Its subcellular location is the lysosome. It catalyses the reaction Hydrolysis of terminal non-reducing N-acetyl-D-hexosamine residues in N-acetyl-beta-D-hexosaminides.. It carries out the reaction N-acetyl-beta-D-galactosaminyl-(1-&gt;4)-beta-D-3-sulfogalactosyl-(1-&gt;4)-beta-D-glucosyl-(1&lt;-&gt;1')-ceramide + H2O = a beta-D-3-sulfogalactosyl-(1-&gt;4)-beta-D-glucosyl-(1&lt;-&gt;1')-ceramide + N-acetyl-beta-D-galactosamine. The catalysed reaction is a ganglioside GM2 (d18:1(4E)) + H2O = a ganglioside GM3 (d18:1(4E)) + N-acetyl-beta-D-galactosamine. The enzyme catalyses a ganglioside GM2 + H2O = a ganglioside GM3 + N-acetyl-beta-D-galactosamine. It catalyses the reaction beta-D-GalNAc-(1-&gt;4)-alpha-L-IdoA-(1-&gt;3)-beta-D-GalNAc-4-sulfate-(1-&gt;4)-alpha-L-IdoA-(1-&gt;3)-D-GalNAc-4-sulfate + H2O = alpha-L-IdoA-(1-&gt;3)-beta-D-GalNAc-4-sulfate-(1-&gt;4)-alpha-L-IdoA-(1-&gt;3)-D-GalNAc-4-sulfate + N-acetyl-D-galactosamine. It carries out the reaction N-acetyl-beta-D-6-sulfogalactosaminyl-(1-&gt;4)-alpha-L-iduronyl-(1-&gt;3)-N-acetyl-D-6-sulfogalactosamine + H2O = alpha-L-iduronyl-(1-&gt;3)-N-acetyl-D-6-sulfogalactosamine + N-acetyl-D-6-sulfogalactosamine. With respect to regulation, addition of GM2A stimulates the hydrolysis of sulfated glycosphingolipid SM2 and the ganglioside GM2. Its function is as follows. Hydrolyzes the non-reducing end N-acetyl-D-hexosamine and/or sulfated N-acetyl-D-hexosamine of glycoconjugates, such as the oligosaccharide moieties from proteins and neutral glycolipids, or from certain mucopolysaccharides. The isozyme S is as active as the isozyme A on the anionic bis-sulfated glycans, the chondroitin-6-sulfate trisaccharide (C6S-3), and the dermatan sulfate pentasaccharide, and the sulfated glycosphingolipid SM2. The isozyme B does not hydrolyze each of these substrates, however hydrolyzes efficiently neutral oligosaccharide. Only the isozyme A is responsible for the degradation of GM2 gangliosides in the presence of GM2A. This chain is Beta-hexosaminidase subunit alpha, found in Pongo abelii (Sumatran orangutan).